A 431-amino-acid polypeptide reads, in one-letter code: MANSC domain-containing protein 1 (431 aa).

Residues 1-26 form the signal peptide; the sequence is MFFGGKGSLTYTLVIICFLTLRLAAS. Topologically, residues 27 to 385 are extracellular; sequence QNCLNKSLED…QYGLPFEKWL (359 aa). N-linked (GlcNAc...) asparagine glycosylation is present at N31. An MANSC domain is found at 33–117; it reads SLEDVVIDIQ…LKPAKGLRSY (85 aa). N-linked (GlcNAc...) asparagine glycosylation is found at N222 and N251. The segment at 236-279 is disordered; it reads HTTSATPKPAIRLPTNASVTPSGTSQPQLATTSPPVTTVTSQPP. The span at 250-265 shows a compositional bias: polar residues; sequence TNASVTPSGTSQPQLA. A compositionally biased stretch (low complexity) spans 266–279; it reads TTSPPVTTVTSQPP. N-linked (GlcNAc...) asparagine glycans are attached at residues N327 and N352. The interval 352–372 is disordered; it reads NKTASWEGREASPGRSSQGNV. A helical transmembrane segment spans residues 386 to 408; it reads LIGSLLFGVLFLVIGLVLLGRIL. At 409–431 the chain is on the cytoplasmic side; sequence SESLRRKRYSRLDYLINGIYVDI.

It localises to the membrane. The sequence is that of MANSC domain-containing protein 1 (MANSC1) from Macaca fascicularis (Crab-eating macaque).